A 396-amino-acid polypeptide reads, in one-letter code: S-adenosylmethionine synthase (396 aa).

An ATP-binding site is contributed by histidine 14. Aspartate 16 serves as a coordination point for Mg(2+). Residue glutamate 42 coordinates K(+). Positions 55 and 98 each coordinate L-methionine. Residues 98–108 form a flexible loop region; it reads QSPDIAMGVDK. ATP contacts are provided by residues 174–176, 240–241, aspartate 249, 255–256, alanine 272, and lysine 276; these read DGK, RF, and RK. Aspartate 249 contributes to the L-methionine binding site. Lysine 280 provides a ligand contact to L-methionine.

It belongs to the AdoMet synthase family. Homotetramer; dimer of dimers. It depends on Mg(2+) as a cofactor. K(+) is required as a cofactor.

Its subcellular location is the cytoplasm. The catalysed reaction is L-methionine + ATP + H2O = S-adenosyl-L-methionine + phosphate + diphosphate. The protein operates within amino-acid biosynthesis; S-adenosyl-L-methionine biosynthesis; S-adenosyl-L-methionine from L-methionine: step 1/1. Functionally, catalyzes the formation of S-adenosylmethionine (AdoMet) from methionine and ATP. The overall synthetic reaction is composed of two sequential steps, AdoMet formation and the subsequent tripolyphosphate hydrolysis which occurs prior to release of AdoMet from the enzyme. The chain is S-adenosylmethionine synthase from Caldicellulosiruptor saccharolyticus (strain ATCC 43494 / DSM 8903 / Tp8T 6331).